Reading from the N-terminus, the 859-residue chain is Ubiquitin carboxyl-terminal hydrolase 23 (859 aa).

A compositionally biased stretch (polar residues) spans 1–24; the sequence is MEVATSSTEITIQTDRDPSSNNNG. A disordered region spans residues 1 to 26; sequence MEVATSSTEITIQTDRDPSSNNNGSC. Residues 107 to 410 form the USP domain; that stretch reads AGLQNLGNTC…KAYMLFYVRD (304 aa). The active-site Nucleophile is the cysteine 116. Histidine 369 functions as the Proton acceptor in the catalytic mechanism. Disordered regions lie at residues 722-749 and 822-859; these read MISS…ASQN and EESY…AYRI.

This sequence belongs to the peptidase C19 family.

It carries out the reaction Thiol-dependent hydrolysis of ester, thioester, amide, peptide and isopeptide bonds formed by the C-terminal Gly of ubiquitin (a 76-residue protein attached to proteins as an intracellular targeting signal).. Functionally, recognizes and hydrolyzes the peptide bond at the C-terminal Gly of ubiquitin. Involved in the processing of poly-ubiquitin precursors as well as that of ubiquitinated proteins. In Arabidopsis thaliana (Mouse-ear cress), this protein is Ubiquitin carboxyl-terminal hydrolase 23 (UBP23).